A 302-amino-acid chain; its full sequence is Zinc transporter ZIP1 (302 aa).

Residues 1 to 6 (MDYLLQ) lie on the Extracellular side of the membrane. A helical transmembrane segment spans residues 7–27 (VKVGALVGLLLLTLFFGFIPA). The Cytoplasmic segment spans residues 28 to 44 (RMKWFHVTGGTELHKAV). Residues 45 to 65 (LSFVSCFAGGVFLSACLLDII) traverse the membrane as a helical segment. The Extracellular portion of the chain corresponds to 66–86 (PDYLSDIHGELQKRDLDDGFP). Residues 87–107 (LPEFIMACGFFTVLILEKMVL) form a helical membrane-spanning segment. At 108–158 (SCTEGHRNEETAPLLAPAAPNGHAHGHPSVNDLEGSGHHVHVDFHAHSSFR) the chain is on the cytoplasmic side. The helical transmembrane segment at 159–179 (SFMLFLSLSLHSVFEGLAIGL) threads the bilayer. The Extracellular segment spans residues 180–185 (QTTNAK). Residues 186–206 (VLEICIAILVHKSIIVFSLSV) traverse the membrane as a helical segment. Residues 207 to 219 (KLVQSAVKPLWVV) are Cytoplasmic-facing. A helical membrane pass occupies residues 220 to 240 (LYVTVFAIMSPLGIGIGIVVI). Residues 241-247 (ETERQAG) lie on the Extracellular side of the membrane. A helical transmembrane segment spans residues 248–268 (GLIQAVLEGLAAGTFIYITFL). Residues 269–281 (EILPHELNSSERP) are Cytoplasmic-facing. Residues 282–302 (LLKVLFLLCGFSIMAALCFLG) form a helical membrane-spanning segment.

The protein belongs to the ZIP transporter (TC 2.A.5) family. As to expression, ubiquitous. Highest levels in ovary, high levels in heart, eye, kidney and brain, moderate levels in intestine and low levels in gill and skin.

It is found in the cell membrane. It localises to the endoplasmic reticulum membrane. The enzyme catalyses Zn(2+)(in) = Zn(2+)(out). In terms of biological role, transporter for the divalent cation Zn(2+). Mediates the influx of Zn(2+) into cells from extracellular space. The protein is Zinc transporter ZIP1 (slc39a1) of Danio rerio (Zebrafish).